The primary structure comprises 193 residues: Cbp/p300-interacting transactivator 1 (193 aa).

Disordered stretches follow at residues 1–26 (MPTTSRPALDVKGGTSPAKEDANQEM), 50–88 (VASNGTKASGAPTSSSGSPIGSPTTTPPTKPPSFNLHPA), and 106–147 (GMAA…SPAI). Low complexity predominate over residues 54–73 (GTKASGAPTSSSGSPIGSPT). The short motif at 158-167 (LMSLVVELGL) is the Nuclear export signal element.

This sequence belongs to the CITED family. Interacts (via C-terminus) with CREBBP. Interacts with EGR2. Homodimer. Binds to RBM14. Interacts (via N-terminus) with HSPA8; the interaction suppresses the association of CITED1 with p300/CBP and SMAD-mediated transcription transactivation. Interacts (via C-terminus) with TOX3 (via HGM box); the interaction increases estrogen-response element (ERE)-dependent transcription and protection against cell death. Interacts with ESR1; the interaction occurs in a estrogen-dependent manner. Interacts (unphosphorylated form preferentially and via C-terminus) with EP300. Post-translationally, phosphorylated. Phosphorylation changes in a cell cycle-dependent manner and reduces its transcriptional coactivator activity. In terms of tissue distribution, expressed only in melanocytes and testis.

It localises to the nucleus. Its subcellular location is the cytoplasm. Functionally, transcriptional coactivator of the p300/CBP-mediated transcription complex. Enhances SMAD-mediated transcription by strengthening the functional link between the DNA-binding SMAD transcription factors and the p300/CBP transcription coactivator complex. Stimulates estrogen-dependent transactivation activity mediated by estrogen receptors signaling; stabilizes the interaction of estrogen receptor ESR1 and histone acetyltransferase EP300. Positively regulates TGF-beta signaling through its association with the SMAD/p300/CBP-mediated transcriptional coactivator complex. Induces transcription from estrogen-responsive promoters and protection against cell death. Potentiates EGR2-mediated transcriptional activation activity from the ERBB2 promoter. Acts as an inhibitor of osteoblastic mineralization through a cAMP-dependent parathyroid hormone receptor signaling. May play a role in pigmentation of melanocytes. Associates with chromatin to the estrogen-responsive TGF-alpha promoter region in a estrogen-dependent manner. The protein is Cbp/p300-interacting transactivator 1 (CITED1) of Homo sapiens (Human).